The primary structure comprises 549 residues: Probable chaperonin-like protein PrmG (549 aa).

Belongs to the chaperonin (HSP60) family.

Functionally, probably plays an essential role in the productive folding of PrmA, and thus in the formation of the active PrmABCD complex. The protein is Probable chaperonin-like protein PrmG (prmG) of Rhodococcus jostii (strain RHA1).